The primary structure comprises 207 residues: High frequency lysogenization protein HflD homolog (207 aa).

This sequence belongs to the HflD family.

It is found in the cytoplasm. The protein localises to the cell inner membrane. This chain is High frequency lysogenization protein HflD homolog, found in Azotobacter vinelandii (strain DJ / ATCC BAA-1303).